The primary structure comprises 272 residues: 1,4-dihydroxy-2-naphthoyl-CoA synthase (272 aa).

Residues Arg33, Ser72–Gln76, Tyr84, Tyr116–Gly120, Thr142, Ser148, Tyr245, and Lys260 contribute to the substrate site. Hydrogencarbonate is bound at residue Gln141–Gly143.

Belongs to the enoyl-CoA hydratase/isomerase family. MenB subfamily. Hydrogencarbonate is required as a cofactor.

The enzyme catalyses 2-succinylbenzoyl-CoA + H(+) = 1,4-dihydroxy-2-naphthoyl-CoA + H2O. Its pathway is quinol/quinone metabolism; 1,4-dihydroxy-2-naphthoate biosynthesis; 1,4-dihydroxy-2-naphthoate from chorismate: step 6/7. It participates in quinol/quinone metabolism; menaquinone biosynthesis. In terms of biological role, converts o-succinylbenzoyl-CoA (OSB-CoA) to 1,4-dihydroxy-2-naphthoyl-CoA (DHNA-CoA). The chain is 1,4-dihydroxy-2-naphthoyl-CoA synthase from Staphylococcus epidermidis (strain ATCC 12228 / FDA PCI 1200).